A 256-amino-acid chain; its full sequence is 3-methyl-2-oxobutanoate hydroxymethyltransferase (256 aa).

Mg(2+) is bound by residues aspartate 42 and aspartate 86. Residues 42 to 43 (DS), aspartate 86, and lysine 116 each bind 3-methyl-2-oxobutanoate. Glutamate 118 provides a ligand contact to Mg(2+). The Proton acceptor role is filled by glutamate 185.

This sequence belongs to the PanB family. Homodecamer; pentamer of dimers. Mg(2+) serves as cofactor.

It is found in the cytoplasm. The enzyme catalyses 3-methyl-2-oxobutanoate + (6R)-5,10-methylene-5,6,7,8-tetrahydrofolate + H2O = 2-dehydropantoate + (6S)-5,6,7,8-tetrahydrofolate. Its pathway is cofactor biosynthesis; (R)-pantothenate biosynthesis; (R)-pantoate from 3-methyl-2-oxobutanoate: step 1/2. In terms of biological role, catalyzes the reversible reaction in which hydroxymethyl group from 5,10-methylenetetrahydrofolate is transferred onto alpha-ketoisovalerate to form ketopantoate. The chain is 3-methyl-2-oxobutanoate hydroxymethyltransferase from Prochlorococcus marinus (strain SARG / CCMP1375 / SS120).